A 540-amino-acid chain; its full sequence is ADP,ATP carrier protein 2 (540 aa).

The next 12 helical transmembrane spans lie at 23–43, 61–81, 93–113, 150–170, 185–205, 222–242, 292–312, 334–354, 361–381, 389–409, 455–475, and 477–497; these read FSKFIPLFFLAFFVGVNYALL, VIPFLKVWGIVPGAVIVTMIY, VFISLVGGFLGFFALFATVIY, LYYVMSELWSSIVLSTLFWGV, ALINTGLNLSSVFAGEVSLWL, EVLLNITLLIVLAGGVILYLY, LLGIAVVVLSYNLVIHLFEVV, ITTLTGIVSALTGIFAAGQTI, IGALVPPLTMLITGALFFGAI, MIFGGILGISPLVLTAWLGGV, SGGSLVYQGLLIIFSSVAASL, and AITIVLLLALGSWIFVIAWLG.

This sequence belongs to the ADP/ATP translocase tlc family.

Its subcellular location is the cell membrane. The protein is ADP,ATP carrier protein 2 (tlcB) of Chlamydia trachomatis serovar D (strain ATCC VR-885 / DSM 19411 / UW-3/Cx).